The chain runs to 447 residues: Elongation factor 1-alpha (447 aa).

Residues 5-230 form the tr-type G domain; it reads KIHISIVVIG…DQISEPKRPS (226 aa). Residues 14-21 are G1; it reads GHVDSGKS. A GTP-binding site is contributed by 14–21; it reads GHVDSGKS. An N6,N6-dimethyllysine modification is found at Lys55. Positions 70–74 are G2; that stretch reads GITID. Position 79 is an N6,N6,N6-trimethyllysine (Lys79). The segment at 91 to 94 is G3; it reads DAPG. GTP is bound by residues 91–95 and 153–156; these read DAPGH and NKMD. The G4 stretch occupies residues 153–156; it reads NKMD. An N6,N6,N6-trimethyllysine modification is found at Lys187. The segment at 194 to 196 is G5; it reads SGF. At Lys261 the chain carries N6-methyllysine. Glu289 is modified (5-glutamyl glycerylphosphorylethanolamine). Position 306 is an N6,N6,N6-trimethyllysine (Lys306). A 5-glutamyl glycerylphosphorylethanolamine modification is found at Glu362. Position 396 is an N6,N6,N6-trimethyllysine (Lys396).

It belongs to the TRAFAC class translation factor GTPase superfamily. Classic translation factor GTPase family. EF-Tu/EF-1A subfamily.

The protein resides in the cytoplasm. Its function is as follows. This protein promotes the GTP-dependent binding of aminoacyl-tRNA to the A-site of ribosomes during protein biosynthesis. The sequence is that of Elongation factor 1-alpha from Daucus carota (Wild carrot).